Consider the following 227-residue polypeptide: 2,3-bisphosphoglycerate-dependent phosphoglycerate mutase (227 aa).

Residues 7 to 14, 20 to 21, R59, 86 to 89, K97, 113 to 114, and 182 to 183 contribute to the substrate site; these read RHGLSEWN, TG, ERHY, RR, and GN. H8 functions as the Tele-phosphohistidine intermediate in the catalytic mechanism. E86 (proton donor/acceptor) is an active-site residue.

The protein belongs to the phosphoglycerate mutase family. BPG-dependent PGAM subfamily. As to quaternary structure, homodimer.

The enzyme catalyses (2R)-2-phosphoglycerate = (2R)-3-phosphoglycerate. The protein operates within carbohydrate degradation; glycolysis; pyruvate from D-glyceraldehyde 3-phosphate: step 3/5. Its function is as follows. Catalyzes the interconversion of 2-phosphoglycerate and 3-phosphoglycerate. The sequence is that of 2,3-bisphosphoglycerate-dependent phosphoglycerate mutase from Actinobacillus succinogenes (strain ATCC 55618 / DSM 22257 / CCUG 43843 / 130Z).